Reading from the N-terminus, the 64-residue chain is Conotoxin VnMRCL-04 (64 aa).

A signal peptide spans 1–22 (MRCLPVFVILLLLIASAPSVDA). The propeptide occupies 23–48 (RPKTKDDVPLASFHGNAERTLLNILR). A Tryptophan amide modification is found at Trp-63.

Belongs to the conotoxin T superfamily. Post-translationally, contains 2 disulfide bonds that can be either 'C1-C3, C2-C4' or 'C1-C4, C2-C3', since these disulfide connectivities have been observed for conotoxins with cysteine framework V (for examples, see AC P0DQQ7 and AC P81755). As to expression, expressed by the venom duct.

Its subcellular location is the secreted. The chain is Conotoxin VnMRCL-04 from Conus ventricosus (Mediterranean cone).